Reading from the N-terminus, the 304-residue chain is Non-specific ribonucleoside hydrolase RihC (304 aa).

The active site involves histidine 233.

The protein belongs to the IUNH family. RihC subfamily.

In terms of biological role, hydrolyzes both purine and pyrimidine ribonucleosides with a broad-substrate specificity. The chain is Non-specific ribonucleoside hydrolase RihC from Shigella boydii serotype 18 (strain CDC 3083-94 / BS512).